The chain runs to 2496 residues: Non-reducing polyketide synthase adrD (2496 aa).

Positions 15–254 are N-terminal acylcarrier protein transacylase domain (SAT); sequence LVFGPQIAEI…HHASHITAVQ (240 aa). The Ketosynthase family 3 (KS3) domain occupies 387-808; sequence ATPIAITGMG…GSNAALVVKQ (422 aa). Active-site for beta-ketoacyl synthase activity residues include C552, H687, and H726. A malonyl-CoA:ACP transacylase (MAT) domain region spans residues 914 to 1223; sequence LCFGGQNGNE…QSLDLGGPQG (310 aa). The active-site For acyl/malonyl transferase activity is S1001. The segment at 1295-1423 is N-terminal hotdog fold; sequence KEFVQLLTKQ…GEISLHPFGQ (129 aa). Positions 1295-1602 constitute a PKS/mFAS DH domain; the sequence is KEFVQLLTKQ…FTSVSIAGLA (308 aa). The tract at residues 1296–1601 is product template (PT) domain; the sequence is EFVQLLTKQP…EFTSVSIAGL (306 aa). H1326 (proton acceptor; for dehydratase activity) is an active-site residue. The C-terminal hotdog fold stretch occupies residues 1451 to 1602; that stretch reads ESSGLKGFAV…FTSVSIAGLA (152 aa). The Proton donor; for dehydratase activity role is filled by D1509. Residues 1615-1629 show a composition bias toward basic and acidic residues; that stretch reads EKASPDLSLRNDSKV. Residues 1615 to 1645 form a disordered region; sequence EKASPDLSLRNDSKVDVNPTPQNTAPVVQPT. Positions 1633–1645 are enriched in polar residues; that stretch reads PTPQNTAPVVQPT. In terms of domain architecture, Carrier spans 1652-1726; the sequence is PGYFVVVQEM…ALVQTIFPDA (75 aa). S1686 carries the post-translational modification O-(pantetheine 4'-phosphoryl)serine. A methyltransferase (CMeT) domain region spans residues 1888–2121; sequence QHRSEHHLLK…GFQWVDWTHN (234 aa). Residues 2151–2496 are thioesterase (TE) domain; that stretch reads RVMNEETVPY…YEFLRDHVRY (346 aa). Residues S2274 and D2433 each act as for thioesterase activity in the active site.

The enzyme catalyses 3 malonyl-CoA + acetyl-CoA + 2 S-adenosyl-L-methionine = 3,5-dimethylorsellinate + 2 S-adenosyl-L-homocysteine + 3 CO2 + 4 CoA. Its pathway is secondary metabolite biosynthesis; terpenoid biosynthesis. Functionally, non-reducing polyketide synthase; part of the gene cluster that mediates the biosynthesis of andrastins, meroterpenoid compounds that exhibit inhibitory activity against ras farnesyltransferase, suggesting that they could be promising leads for antitumor agents. The first step of the pathway is the synthesis of 3,5-dimethylorsellinic acid (DMOA) by the polyketide synthase adrD via condensation of one acetyl-CoA starter unit with 3 malonyl-CoA units and 2 methylations. DMAO is then converted to farnesyl-DMAO by the prenyltransferase adrG. The methyltransferase adrK catalyzes the methylation of the carboxyl group of farnesyl-DMAO to farnesyl-DMAO methyl ester which is further converted to epoxyfarnesyl-DMAO methyl ester by the FAD-dependent monooxygenase adrH. The terpene cyclase adrI then catalyzes the carbon skeletal rearrangement to generate the andrastin E, the first compound in the pathway having the andrastin scaffold, with the tetracyclic ring system. The post-cyclization tailoring enzymes adrF, adrE, adrJ, and adrA, are involved in the conversion of andrastin E into andrastin A. The short chain dehydrogenase adrF is responsible for the oxidation of the C-3 a hydroxyl group of andrastin E to yield the corresponding ketone, andrastin D. The ketoreductase adrE stereoselectively reduces the carbonyl moiety to reverse the stereochemistry of the C-3 position to yield andrastin F. The acetyltransferase adrJ is the acetyltransferase that attaches the acetyl group to the C-3 hydroxyl group of andrastin F to yield andrastin C. Finally, the cytochrome P450 monooxygenase adrA catalyzes two sequential oxidation reactions of the C-23 methyl group, to generate the corresponding alcohol andrastin B, and aldehyde andrastin A. The protein is Non-reducing polyketide synthase adrD of Penicillium rubens (strain ATCC 28089 / DSM 1075 / NRRL 1951 / Wisconsin 54-1255) (Penicillium chrysogenum).